A 294-amino-acid chain; its full sequence is Putative maltodextrin utilization protein YvdJ (294 aa).

4 helical membrane passes run 35–55, 184–204, 228–248, and 249–269; these read LSFL…VSFV, MIMM…TFVL, IAIC…MVHF, and DLIT…SFAF.

The protein resides in the cell membrane. Could have a role in maltodextrin utilization. The protein is Putative maltodextrin utilization protein YvdJ (yvdJ) of Bacillus subtilis (strain 168).